The chain runs to 485 residues: Proline betaine:corrinoid methyltransferase (485 aa).

Belongs to the trimethylamine methyltransferase family. In terms of assembly, the proline betaine:THF methyl transfer system is composed of two methyltransferases, MtpB and MtqA, and the corrinoid protein MtqC.

The catalysed reaction is Co(I)-[quaternary-amine-specific corrinoid protein] + L-proline betaine + H(+) = methyl-Co(III)-[quaternary-amine-specific corrinoid protein] + N-methyl-L-proline. In terms of biological role, involved in the degradation of the quaternary amine L-proline betaine. Component of a corrinoid-dependent methyltransferase system that transfers a methyl group from L-proline betaine to tetrahydrofolate (THF), forming methyl-THF, a key intermediate in the Wood-Ljungdahl acetogenesis pathway. MtpB catalyzes the methylation of the corrinoid protein MtqC, using L-proline betaine as the methyl donor. Shows weak activity with some other quaternary amines, including carnitine, phosphocholine, glycine betaine or betonicine, but cannot methylate free cob(I)alamin. The polypeptide is Proline betaine:corrinoid methyltransferase (Eubacterium limosum).